Reading from the N-terminus, the 214-residue chain is Probable GTP-binding protein EngB (214 aa).

The 173-residue stretch at 22-194 (NLPEIAFAGR…WARIDALLSP (173 aa)) folds into the EngB-type G domain. GTP-binding positions include 30–37 (GRSNVGKS), 57–61 (GRTQL), 75–78 (DLPG), 142–145 (TKCD), and 173–175 (FSA). Mg(2+) contacts are provided by Ser-37 and Thr-59.

The protein belongs to the TRAFAC class TrmE-Era-EngA-EngB-Septin-like GTPase superfamily. EngB GTPase family. The cofactor is Mg(2+).

Necessary for normal cell division and for the maintenance of normal septation. This chain is Probable GTP-binding protein EngB, found in Citrifermentans bemidjiense (strain ATCC BAA-1014 / DSM 16622 / JCM 12645 / Bem) (Geobacter bemidjiensis).